Reading from the N-terminus, the 139-residue chain is Histone H3-like 5 (139 aa).

Over residues 1–10 (MARTKQTARI) the composition is skewed to polar residues. The tract at residues 1 to 43 (MARTKQTARISTGGKAPRKQLAPKAARQSAPATGGVKKPHRFR) is disordered. Lysine 5 is modified (N6,N6,N6-trimethyllysine; alternate). Lysine 5 is modified (N6,N6-dimethyllysine; alternate). Lysine 5 is modified (N6-methyllysine; alternate). Phosphoserine is present on serine 11. Position 12 is a phosphothreonine (threonine 12). An N6-acetyllysine modification is found at lysine 15. Lysine 19 and lysine 24 each carry N6-methyllysine; alternate. Residues lysine 19 and lysine 24 each carry the N6-acetyllysine; alternate modification. Position 29 is a phosphoserine (serine 29). Lysine 37 is subject to N6,N6,N6-trimethyllysine; alternate. Lysine 37 carries the post-translational modification N6,N6-dimethyllysine; alternate. At lysine 37 the chain carries N6-methyllysine; alternate.

This sequence belongs to the histone H3 family. In terms of assembly, the nucleosome is a histone octamer containing two molecules each of H2A, H2B, H3 and H4 assembled in one H3-H4 heterotetramer and two H2A-H2B heterodimers. The octamer wraps approximately 147 bp of DNA.

It is found in the nucleus. Its subcellular location is the chromosome. Functionally, core component of nucleosome. Nucleosomes wrap and compact DNA into chromatin, limiting DNA accessibility to the cellular machineries which require DNA as a template. Histones thereby play a central role in transcription regulation, DNA repair, DNA replication and chromosomal stability. DNA accessibility is regulated via a complex set of post-translational modifications of histones, also called histone code, and nucleosome remodeling. In Arabidopsis thaliana (Mouse-ear cress), this protein is Histone H3-like 5.